A 96-amino-acid polypeptide reads, in one-letter code: Co-chaperonin GroES (96 aa).

Belongs to the GroES chaperonin family. As to quaternary structure, heptamer of 7 subunits arranged in a ring. Interacts with the chaperonin GroEL.

It is found in the cytoplasm. In terms of biological role, together with the chaperonin GroEL, plays an essential role in assisting protein folding. The GroEL-GroES system forms a nano-cage that allows encapsulation of the non-native substrate proteins and provides a physical environment optimized to promote and accelerate protein folding. GroES binds to the apical surface of the GroEL ring, thereby capping the opening of the GroEL channel. The chain is Co-chaperonin GroES from Methylorubrum populi (strain ATCC BAA-705 / NCIMB 13946 / BJ001) (Methylobacterium populi).